The following is a 615-amino-acid chain: TANK-binding kinase 1-binding protein 1 (615 aa).

Positions 1–279 (MESMFEDDIS…QDLASNQSER (279 aa)) are homodimerization. Residues 48-162 (YGDIKERLGG…ALVETHLRQI (115 aa)) are a coiled coil. S184 carries the phosphoserine modification. A coiled-coil region spans residues 221–276 (VSDLERRRLEEALEAAQGEARGAQLREEQLQAECERLQGELKQLQETRAQDLASNQ). The interval 280-329 (DMAWVKRVGDDQVNLALAYTELTEELGRLRELSSLQGRILRTLLQEQARS) is interaction with TBK1 and IKBKE. Positions 326–458 (QARSGGQRHS…SHHVKAGFQG (133 aa)) are disordered. Positions 345-365 (PQCPSPSPPARAAPPCPPCQS) are enriched in pro residues. Phosphoserine occurs at positions 365, 372, 379, 385, 400, and 415. Residues 389–406 (PSCPSPVPQRRSPVPPSC) are compositionally biased toward pro residues. Residues 416–435 (PVPPSCPAPQPRPPPPPPPG) are compositionally biased toward pro residues. Phosphoserine is present on residues S504 and S534. The segment at 583–609 (IRSCPLCQLGFPVGYPDDALIKHIDSH) adopts a UBZ1-type zinc-finger fold. Positions 586, 589, 605, and 609 each coordinate Zn(2+).

Homodimer. May form a heterodimer with NAP1. Interacts with TKB1 and IKBKE. Weakly interacts with DDX3X. In terms of assembly, (Microbial infection) Interacts with vaccinia virus protein C6. In terms of tissue distribution, detected in leukocytes, lung, placenta, small intestine, liver, kidney, spleen, muscle, heart, brain and at low levels in thymus.

Its function is as follows. Adapter protein which constitutively binds TBK1 and IKBKE playing a role in antiviral innate immunity. This is TANK-binding kinase 1-binding protein 1 from Homo sapiens (Human).